The primary structure comprises 545 residues: ATP synthase subunit alpha (545 aa).

173–180 (GDRQTGKT) provides a ligand contact to ATP.

Belongs to the ATPase alpha/beta chains family. In terms of assembly, F-type ATPases have 2 components, CF(1) - the catalytic core - and CF(0) - the membrane proton channel. CF(1) has five subunits: alpha(3), beta(3), gamma(1), delta(1), epsilon(1). CF(0) has three main subunits: a(1), b(2) and c(9-12). The alpha and beta chains form an alternating ring which encloses part of the gamma chain. CF(1) is attached to CF(0) by a central stalk formed by the gamma and epsilon chains, while a peripheral stalk is formed by the delta and b chains.

The protein resides in the cell membrane. The catalysed reaction is ATP + H2O + 4 H(+)(in) = ADP + phosphate + 5 H(+)(out). Functionally, produces ATP from ADP in the presence of a proton gradient across the membrane. The alpha chain is a regulatory subunit. This is ATP synthase subunit alpha from Paenarthrobacter aurescens (strain TC1).